A 181-amino-acid polypeptide reads, in one-letter code: Oligoribonuclease (181 aa).

An Exonuclease domain is found at 8 to 171 (LIWIDLEMTG…DDIRESVAEL (164 aa)). The active site involves Tyr129.

This sequence belongs to the oligoribonuclease family.

Its subcellular location is the cytoplasm. Its function is as follows. 3'-to-5' exoribonuclease specific for small oligoribonucleotides. The sequence is that of Oligoribonuclease from Enterobacter sp. (strain 638).